The chain runs to 317 residues: Melanocyte-stimulating hormone receptor (317 aa).

Topologically, residues 1-37 (MSVQGPQRRLLGSVNSTSPAAPRLGLAANQTGPRCLE) are extracellular. N-linked (GlcNAc...) asparagine glycans are attached at residues N15 and N29. The helical transmembrane segment at 38–63 (VSVPDGLFLSLGLVSVVENVLVVAAI) threads the bilayer. The Cytoplasmic segment spans residues 64-72 (AKNRNLHSP). The chain crosses the membrane as a helical span at residues 73–93 (MYYFICCLAVSDLLVSVSSVL). Residues 94–118 (ETAVMLLLEAGTLAGRAAVVQQLDD) lie on the Extracellular side of the membrane. Residues 119–140 (IIDVLVCGAMVSSLCFLGAIAV) traverse the membrane as a helical segment. Over 141-163 (DRYISIFYALRYHSIVTLPRAWR) the chain is Cytoplasmic. A helical membrane pass occupies residues 164-183 (AISAIWVASVLSSTLFIAYY). Residues 184 to 191 (DHTAVLLC) lie on the Extracellular side of the membrane. Residues 192 to 211 (LVSFFVAMLVLMAVLYVHML) traverse the membrane as a helical segment. The Cytoplasmic segment spans residues 212-240 (ARACQHARGIARLHKRQRPVHQGLGLKGA). A helical membrane pass occupies residues 241 to 266 (ATLTILLGIFFLCWGPFFLHLSLMVL). Residues 267 to 279 (CPRHPICGCVFKN) lie on the Extracellular side of the membrane. The chain crosses the membrane as a helical span at residues 280 to 300 (FNLFLTLIICNSIVDPLIYAF). At 301–317 (RSQELRKTLREVLLCSW) the chain is on the cytoplasmic side. Residue C315 is the site of S-palmitoyl cysteine attachment.

This sequence belongs to the G-protein coupled receptor 1 family. As to quaternary structure, interacts with MGRN1, but does not undergo MGRN1-mediated ubiquitination; this interaction competes with GNAS-binding and thus inhibits agonist-induced cAMP production. Interacts with OPN3; the interaction results in a decrease in MC1R-mediated cAMP signaling and ultimately a decrease in melanin production in melanocytes.

It is found in the cell membrane. Its function is as follows. Receptor for MSH (alpha, beta and gamma) and ACTH. The activity of this receptor is mediated by G proteins which activate adenylate cyclase. Mediates melanogenesis, the production of eumelanin (black/brown) and phaeomelanin (red/yellow), via regulation of cAMP signaling in melanocytes. The protein is Melanocyte-stimulating hormone receptor (MC1R) of Puma yagouaroundi (Jaguarundi).